The chain runs to 1603 residues: Transcription factor Gibbin (1603 aa).

Disordered regions lie at residues 19-108, 150-236, 264-285, and 394-467; these read PDYL…SSSR, LRLS…STDY, LEPP…FLDP, and CRRR…RKGK. Over residues 30-47 the composition is skewed to pro residues; it reads GGPPTPRPLLPTRPPASP. The residue at position 79 (K79) is an N6-acetyllysine. Polar residues predominate over residues 166–178; that stretch reads SFFSSPSLANSIR. Over residues 179 to 194 the composition is skewed to basic and acidic residues; that stretch reads SPEERATPHAKSERPS. Positions 216-225 are enriched in low complexity; it reads PGATAAATGL. Residue S268 is modified to Phosphoserine. A compositionally biased stretch (low complexity) spans 273-285; that stretch reads PQLLDPQPRFLDP. The a.T hook 1 DNA-binding region spans 396-408; it reads RRKAGRGRKADAG. Residues 428-446 show a composition bias toward pro residues; it reads EPPPPPPPPPPALPGPGPV. The a.T hook 2 DNA-binding region spans 544 to 556; it reads KRKRGRPPKNLLL. The segment at 581-607 is disordered; that stretch reads MPEVKKRRRRKQKLASPQPSYAADAND. The residue at position 596 (S596) is a Phosphoserine. K609 participates in a covalent cross-link: Glycyl lysine isopeptide (Lys-Gly) (interchain with G-Cter in SUMO2). Disordered stretches follow at residues 717–792 and 806–827; these read LTEL…RNCG and LESG…GQTE. Basic residues predominate over residues 737–746; it reads KPKRKRRSRK. The segment covering 816 to 827 has biased composition (polar residues); the sequence is YYSTGAPSGQTE. Residues S829 and S846 each carry the phosphoserine modification. At R891 the chain carries Omega-N-methylarginine. Phosphoserine is present on residues S896 and S1064. Disordered regions lie at residues 1159 to 1198 and 1253 to 1286; these read VSET…QSSL and ASAA…KKER. Low complexity-rich tracts occupy residues 1160–1171 and 1187–1198; these read SETFSESSSDST and SEASSSEGQSSL. S1187 is modified (phosphoserine). S1322, S1324, and S1399 each carry phosphoserine. The residue at position 1401 (T1401) is a Phosphothreonine. S1403 bears the Phosphoserine mark. A Glycyl lysine isopeptide (Lys-Gly) (interchain with G-Cter in SUMO2) cross-link involves residue K1409. Residues 1503 to 1533 form a disordered region; the sequence is PHLASPPATPKADKEPLEMARPPGPPRGPAA. Phosphoserine is present on residues S1507 and S1549.

The protein localises to the nucleus. Its subcellular location is the chromosome. Its function is as follows. Transcription factor required for the proper patterning of the epidermis, which plays a key role in early epithelial morphogenesis. Directly binds promoter and enhancer regions and acts by maintaining local enhancer-promoter chromatin architecture. Interacts with many sequence-specific zinc-finger transcription factors and methyl-CpG-binding proteins to regulate the expression of mesoderm genes that wire surface ectoderm stratification. The polypeptide is Transcription factor Gibbin (Homo sapiens (Human)).